The primary structure comprises 357 residues: UDP-N-acetylglucosamine--N-acetylmuramyl-(pentapeptide) pyrophosphoryl-undecaprenol N-acetylglucosamine transferase (357 aa).

UDP-N-acetyl-alpha-D-glucosamine contacts are provided by residues 15–17, Asn124, Arg165, Ser194, and Gln288; that span reads TGG.

It belongs to the glycosyltransferase 28 family. MurG subfamily.

The protein resides in the cell inner membrane. It catalyses the reaction di-trans,octa-cis-undecaprenyl diphospho-N-acetyl-alpha-D-muramoyl-L-alanyl-D-glutamyl-meso-2,6-diaminopimeloyl-D-alanyl-D-alanine + UDP-N-acetyl-alpha-D-glucosamine = di-trans,octa-cis-undecaprenyl diphospho-[N-acetyl-alpha-D-glucosaminyl-(1-&gt;4)]-N-acetyl-alpha-D-muramoyl-L-alanyl-D-glutamyl-meso-2,6-diaminopimeloyl-D-alanyl-D-alanine + UDP + H(+). The protein operates within cell wall biogenesis; peptidoglycan biosynthesis. Cell wall formation. Catalyzes the transfer of a GlcNAc subunit on undecaprenyl-pyrophosphoryl-MurNAc-pentapeptide (lipid intermediate I) to form undecaprenyl-pyrophosphoryl-MurNAc-(pentapeptide)GlcNAc (lipid intermediate II). The polypeptide is UDP-N-acetylglucosamine--N-acetylmuramyl-(pentapeptide) pyrophosphoryl-undecaprenol N-acetylglucosamine transferase (Nostoc punctiforme (strain ATCC 29133 / PCC 73102)).